The primary structure comprises 324 residues: DNA repair and recombination protein RadA (324 aa).

ATP is bound at residue glycine 114 to threonine 121.

Belongs to the eukaryotic RecA-like protein family.

Its function is as follows. Involved in DNA repair and in homologous recombination. Binds and assemble on single-stranded DNA to form a nucleoprotein filament. Hydrolyzes ATP in a ssDNA-dependent manner and promotes DNA strand exchange between homologous DNA molecules. The sequence is that of DNA repair and recombination protein RadA from Metallosphaera sedula (strain ATCC 51363 / DSM 5348 / JCM 9185 / NBRC 15509 / TH2).